The following is a 364-amino-acid chain: Caffeic acid 3-O-methyltransferase 3 (364 aa).

Methionine 129–leucine 135 contacts substrate. Residues alanine 161–methionine 179 form a substrate binding region. S-adenosyl-L-methionine contacts are provided by glycine 207, aspartate 230, aspartate 250, methionine 251, and lysine 264. Histidine 268 functions as the Proton acceptor in the catalytic mechanism.

The protein belongs to the class I-like SAM-binding methyltransferase superfamily. Cation-independent O-methyltransferase family. COMT subfamily. In terms of assembly, homodimer.

It catalyses the reaction (E)-caffeate + S-adenosyl-L-methionine = (E)-ferulate + S-adenosyl-L-homocysteine + H(+). It participates in aromatic compound metabolism; phenylpropanoid biosynthesis. Functionally, catalyzes the conversion of caffeic acid to ferulic acid and of 5-hydroxyferulic acid to sinapic acid. The resulting products may subsequently be converted to the corresponding alcohols that are incorporated into lignins. This Populus kitakamiensis (Aspen) protein is Caffeic acid 3-O-methyltransferase 3 (HOMT3).